We begin with the raw amino-acid sequence, 455 residues long: Serine--tRNA ligase (455 aa).

Thr-252–Glu-254 is an L-serine binding site. Residues Arg-283–Glu-285 and Val-299 contribute to the ATP site. Glu-306 lines the L-serine pocket. Glu-370–Ser-373 is a binding site for ATP. Position 406 (Thr-406) interacts with L-serine.

Belongs to the class-II aminoacyl-tRNA synthetase family. Type-1 seryl-tRNA synthetase subfamily. Homodimer. The tRNA molecule binds across the dimer.

It localises to the cytoplasm. It carries out the reaction tRNA(Ser) + L-serine + ATP = L-seryl-tRNA(Ser) + AMP + diphosphate + H(+). The catalysed reaction is tRNA(Sec) + L-serine + ATP = L-seryl-tRNA(Sec) + AMP + diphosphate + H(+). Its pathway is aminoacyl-tRNA biosynthesis; selenocysteinyl-tRNA(Sec) biosynthesis; L-seryl-tRNA(Sec) from L-serine and tRNA(Sec): step 1/1. Catalyzes the attachment of serine to tRNA(Ser). Is also able to aminoacylate tRNA(Sec) with serine, to form the misacylated tRNA L-seryl-tRNA(Sec), which will be further converted into selenocysteinyl-tRNA(Sec). In Thermococcus sibiricus (strain DSM 12597 / MM 739), this protein is Serine--tRNA ligase.